The chain runs to 374 residues: Acetylxylan esterase (374 aa).

Residues 1–22 form the signal peptide; it reads MVFSPRLSAFVALVALTNAATA. One can recognise a CBM1 domain in the interval 23–57; that stretch reads VPMYGQCGGSGYTGPTQCDPGLVCVKLNDWYSQCQ. The interval 58-99 is ser/Thr/Pro-rich linker; that stretch reads SGGAQPPVTTTSSPPVTVSPPPSTTTVAPPVATGPPAPEIPA. A disordered region spans residues 60–86; it reads GAQPPVTTTSSPPVTVSPPPSTTTVAP. The segment covering 63 to 73 has biased composition (low complexity); it reads PPVTTTSSPPV. Positions 100 to 374 are catalytic; the sequence is GQLTQLRSFG…EVVAMDFFGL (275 aa). Asparagine 114 is a glycosylation site (N-linked (GlcNAc...) asparagine). Serine 219 serves as the catalytic Charge relay system. Asparagine 320 is a glycosylation site (N-linked (GlcNAc...) asparagine).

This sequence belongs to the carbohydrate esterase 1 (CE1) family. AxeA subfamily. In terms of assembly, monomer. Glycosylated.

The protein resides in the secreted. The catalysed reaction is Deacetylation of xylans and xylo-oligosaccharides.. It functions in the pathway glycan degradation; xylan degradation. Its function is as follows. Acetylxylan esterase involved in the hydrolysis of xylan, a major structural heterogeneous polysaccharide found in plant biomass representing the second most abundant polysaccharide in the biosphere, after cellulose. Degrades acetylated xylans by cleaving acetyl side groups from the hetero-xylan backbone. This Coprinopsis cinerea (strain Okayama-7 / 130 / ATCC MYA-4618 / FGSC 9003) (Inky cap fungus) protein is Acetylxylan esterase.